The sequence spans 259 residues: Thiamine thiazole synthase (259 aa).

NAD(+)-binding positions include A33, E52–R53, G60, V124, and H152–D154. Residues D154 and H169 each contribute to the Fe cation site. Position 219 (M219) interacts with NAD(+). R229 serves as a coordination point for glycine.

This sequence belongs to the THI4 family. In terms of assembly, homooctamer; tetramer of dimers. Fe(2+) is required as a cofactor.

The enzyme catalyses hydrogen sulfide + glycine + NAD(+) = ADP-5-ethyl-4-methylthiazole-2-carboxylate + nicotinamide + 3 H2O + H(+). Its pathway is cofactor biosynthesis; thiamine diphosphate biosynthesis. Functionally, involved in the biosynthesis of the thiazole moiety of thiamine. Catalyzes the conversion of NAD and glycine to adenosine diphosphate 5-(2-hydroxyethyl)-4-methylthiazole-2-carboxylate (ADT), an adenylated thiazole intermediate, using free sulfide as a source of sulfur. This is Thiamine thiazole synthase from Pyrobaculum neutrophilum (strain DSM 2338 / JCM 9278 / NBRC 100436 / V24Sta) (Thermoproteus neutrophilus).